We begin with the raw amino-acid sequence, 110 residues long: Lichenan-specific phosphotransferase enzyme IIA component (110 aa).

The 99-residue stretch at 3-101 (EEMEQIIFQI…AAEIIELYEK (99 aa)) folds into the PTS EIIA type-3 domain. Catalysis depends on His77, which acts as the Tele-phosphohistidine intermediate; by HPr.

It localises to the cytoplasm. The phosphoenolpyruvate-dependent sugar phosphotransferase system (PTS), a major carbohydrate active -transport system, catalyzes the phosphorylation of incoming sugar substrates concomitant with their translocation across the cell membrane. This system is involved in lichenan transport. The protein is Lichenan-specific phosphotransferase enzyme IIA component (licA) of Bacillus subtilis (strain 168).